The chain runs to 164 residues: ATP synthase subunit b (164 aa).

A helical membrane pass occupies residues 7–25 (SFWLAVSFIIFVYLIYRPA).

This sequence belongs to the ATPase B chain family. In terms of assembly, F-type ATPases have 2 components, F(1) - the catalytic core - and F(0) - the membrane proton channel. F(1) has five subunits: alpha(3), beta(3), gamma(1), delta(1), epsilon(1). F(0) has three main subunits: a(1), b(2) and c(10-14). The alpha and beta chains form an alternating ring which encloses part of the gamma chain. F(1) is attached to F(0) by a central stalk formed by the gamma and epsilon chains, while a peripheral stalk is formed by the delta and b chains.

It is found in the cell inner membrane. F(1)F(0) ATP synthase produces ATP from ADP in the presence of a proton or sodium gradient. F-type ATPases consist of two structural domains, F(1) containing the extramembraneous catalytic core and F(0) containing the membrane proton channel, linked together by a central stalk and a peripheral stalk. During catalysis, ATP synthesis in the catalytic domain of F(1) is coupled via a rotary mechanism of the central stalk subunits to proton translocation. Its function is as follows. Component of the F(0) channel, it forms part of the peripheral stalk, linking F(1) to F(0). This Rickettsia felis (strain ATCC VR-1525 / URRWXCal2) (Rickettsia azadi) protein is ATP synthase subunit b.